The chain runs to 341 residues: Anthranilate phosphoribosyltransferase (341 aa).

5-phospho-alpha-D-ribose 1-diphosphate is bound by residues Gly-79, 82–83 (GD), Thr-87, 89–92 (NIST), 107–115 (KHGNRAVSS), and Ser-119. Gly-79 serves as a coordination point for anthranilate. Ser-91 is a Mg(2+) binding site. Asn-110 contacts anthranilate. Arg-165 lines the anthranilate pocket. Mg(2+) is bound by residues Asp-224 and Glu-225.

This sequence belongs to the anthranilate phosphoribosyltransferase family. In terms of assembly, homodimer. Mg(2+) serves as cofactor.

It catalyses the reaction N-(5-phospho-beta-D-ribosyl)anthranilate + diphosphate = 5-phospho-alpha-D-ribose 1-diphosphate + anthranilate. Its pathway is amino-acid biosynthesis; L-tryptophan biosynthesis; L-tryptophan from chorismate: step 2/5. In terms of biological role, catalyzes the transfer of the phosphoribosyl group of 5-phosphorylribose-1-pyrophosphate (PRPP) to anthranilate to yield N-(5'-phosphoribosyl)-anthranilate (PRA). The chain is Anthranilate phosphoribosyltransferase from Bacillus cereus (strain ATCC 14579 / DSM 31 / CCUG 7414 / JCM 2152 / NBRC 15305 / NCIMB 9373 / NCTC 2599 / NRRL B-3711).